A 1140-amino-acid chain; its full sequence is Chromosome partition protein Smc (1140 aa).

ATP is bound at residue 34 to 41; it reads PNGSGKSN. Positions 160–484 form a coiled coil; sequence VDQFDSEIER…EKEASAKIAS (325 aa). The region spanning 502 to 619 is the SMC hinge domain; that stretch reads EGVIGLVRDL…VQDIDAGRRL (118 aa). The stretch at 660–990 forms a coiled coil; it reads LEGMKIQLSS…MLNEKKREVF (331 aa).

It belongs to the SMC family. Homodimer.

The protein localises to the cytoplasm. Functionally, required for chromosome condensation and partitioning. The polypeptide is Chromosome partition protein Smc (Thermoplasma acidophilum (strain ATCC 25905 / DSM 1728 / JCM 9062 / NBRC 15155 / AMRC-C165)).